Consider the following 199-residue polypeptide: Protein GrpE (199 aa).

It belongs to the GrpE family. Homodimer.

The protein resides in the cytoplasm. In terms of biological role, participates actively in the response to hyperosmotic and heat shock by preventing the aggregation of stress-denatured proteins, in association with DnaK and GrpE. It is the nucleotide exchange factor for DnaK and may function as a thermosensor. Unfolded proteins bind initially to DnaJ; upon interaction with the DnaJ-bound protein, DnaK hydrolyzes its bound ATP, resulting in the formation of a stable complex. GrpE releases ADP from DnaK; ATP binding to DnaK triggers the release of the substrate protein, thus completing the reaction cycle. Several rounds of ATP-dependent interactions between DnaJ, DnaK and GrpE are required for fully efficient folding. The chain is Protein GrpE from Fusobacterium nucleatum subsp. nucleatum (strain ATCC 25586 / DSM 15643 / BCRC 10681 / CIP 101130 / JCM 8532 / KCTC 2640 / LMG 13131 / VPI 4355).